The sequence spans 67 residues: Large ribosomal subunit protein uL29 (67 aa).

Belongs to the universal ribosomal protein uL29 family.

This chain is Large ribosomal subunit protein uL29, found in Ehrlichia ruminantium (strain Gardel).